The primary structure comprises 522 residues: Zinc finger and BTB domain-containing protein 18 (522 aa).

Residues 24-91 (CDCTVLVGDA…MYEGKLQFKD (68 aa)) enclose the BTB domain. Positions 121–143 (ATTEADSTKKEEDASSCSDKVES) are enriched in basic and acidic residues. Residues 121-165 (ATTEADSTKKEEDASSCSDKVESLSDGSSHMAGDLPSDEDEGEDE) form a disordered region. Phosphoserine is present on Ser-157. Residue Lys-273 forms a Glycyl lysine isopeptide (Lys-Gly) (interchain with G-Cter in SUMO2) linkage. An interaction with DNMT3A region spans residues 310 to 427 (EPAHLAPLRE…TFSCMYTLKR (118 aa)). C2H2-type zinc fingers lie at residues 370–392 (FMCPLCNKVFPSPHILQIHLSTH), 410–432 (PTCSLCGKTFSCMYTLKRHERTH), 438–460 (YTCTQCGKSFQYSHNLSRHAVVH), and 466–489 (HACKWCERRFTQSGDLYRHIRKFH). Phosphoserine is present on residues Ser-516 and Ser-517.

This sequence belongs to the krueppel C2H2-type zinc-finger protein family. ZBTB18 subfamily. As to quaternary structure, interacts with DNMT3A.

It is found in the nucleus. Functionally, transcriptional repressor that plays a role in various developmental processes such as myogenesis and brain development. Specifically binds the consensus DNA sequence 5'-[AC]ACATCTG[GT][AC]-3' which contains the E box core, and acts by recruiting chromatin remodeling multiprotein complexes. Plays a key role in myogenesis by directly repressing the expression of ID2 and ID3, 2 inhibitors of skeletal myogenesis. Also involved in controlling cell division of progenitor cells and regulating the survival of postmitotic cortical neurons. May also play a role in the organization of chromosomes in the nucleus. The sequence is that of Zinc finger and BTB domain-containing protein 18 (ZBTB18) from Bos taurus (Bovine).